The following is a 224-amino-acid chain: UPF0173 metal-dependent hydrolase TTHA1283 (224 aa).

Belongs to the UPF0173 family.

In Thermus thermophilus (strain ATCC 27634 / DSM 579 / HB8), this protein is UPF0173 metal-dependent hydrolase TTHA1283.